The chain runs to 98 residues: Acylphosphatase (98 aa).

An Acylphosphatase-like domain is found at 12–98; it reads TYYVRVRGVV…ERRFDRFQQQ (87 aa). Active-site residues include Arg27 and Asn45.

This sequence belongs to the acylphosphatase family.

It carries out the reaction an acyl phosphate + H2O = a carboxylate + phosphate + H(+). The sequence is that of Acylphosphatase (acyP) from Burkholderia ambifaria (strain ATCC BAA-244 / DSM 16087 / CCUG 44356 / LMG 19182 / AMMD) (Burkholderia cepacia (strain AMMD)).